The sequence spans 313 residues: Beta-lactamase FAR-1 (313 aa).

Positions 1 to 28 (MPGVDISFLKKSGRRTMAAAAVIALLGG) are cleaved as a signal peptide. C29 is lipidated: N-palmitoyl cysteine. A lipid anchor (S-diacylglycerol cysteine) is attached at C29. Residue S94 is the Acyl-ester intermediate of the active site. S154 serves as a coordination point for substrate. E190 (proton acceptor) is an active-site residue. 258–260 (KTG) provides a ligand contact to substrate.

It belongs to the class-A beta-lactamase family.

The protein localises to the cell membrane. It catalyses the reaction a beta-lactam + H2O = a substituted beta-amino acid. Its activity is regulated as follows. Inhibited by clavulanic acid, and at a low level by tazobactam and sulbactam. In terms of biological role, confers high levels of resistance to amoxicillin, benzylpenicillin, piperacillin, ticarcillin and cephalothin. Also hydrolyzes aztreonam at a low level. Not active against ceftazidime, cefotaxime and imipenem. The polypeptide is Beta-lactamase FAR-1 (bla) (Nocardia farcinica (strain IFM 10152)).